Reading from the N-terminus, the 218-residue chain is Capsid protein (218 aa).

Methionine 1 bears the N-acetylmethionine; by host mark. The tract at residues 1 to 31 is disordered; sequence MDKSGSPNASRTSRRRRPRRGSRSASGADAG. A compositionally biased stretch (basic residues) spans 12–22; sequence TSRRRRPRRGS.

The protein belongs to the cucumovirus capsid protein family.

Its subcellular location is the virion. Its function is as follows. Capsid protein. Probably binds RNA and plays a role in packaging. The polypeptide is Capsid protein (Cucumber mosaic virus (strain Trk7) (CMV)).